The chain runs to 394 residues: GDSL esterase/lipase At1g31550 (394 aa).

A signal peptide spans methionine 1–serine 27. The active-site Nucleophile is serine 43. 3 N-linked (GlcNAc...) asparagine glycosylation sites follow: asparagine 138, asparagine 290, and asparagine 322. Residues aspartate 345 and histidine 348 contribute to the active site.

It belongs to the 'GDSL' lipolytic enzyme family.

Its subcellular location is the secreted. The chain is GDSL esterase/lipase At1g31550 from Arabidopsis thaliana (Mouse-ear cress).